The sequence spans 198 residues: Inner membrane-spanning protein YciB (198 aa).

Transmembrane regions (helical) follow at residues 36-56 (IFSA…ILYL), 67-87 (LTLV…SETF), 90-110 (WKAP…HFIG), 133-153 (LNIA…YVAF), and 162-182 (FKVF…GIYL).

It belongs to the YciB family.

The protein resides in the cell inner membrane. In terms of biological role, plays a role in cell envelope biogenesis, maintenance of cell envelope integrity and membrane homeostasis. The sequence is that of Inner membrane-spanning protein YciB from Pseudomonas savastanoi pv. phaseolicola (strain 1448A / Race 6) (Pseudomonas syringae pv. phaseolicola (strain 1448A / Race 6)).